Reading from the N-terminus, the 278-residue chain is HTH-type transcriptional regulator HdfR (278 aa).

The region spanning 1–58 is the HTH lysR-type domain; the sequence is MDTELLKTFLEVSRTRHFGRAAEALYLTQSAVSFRIRQLENQLGVNLFTRHRNNIRLT. Positions 18–37 form a DNA-binding region, H-T-H motif; sequence FGRAAEALYLTQSAVSFRIR.

The protein belongs to the LysR transcriptional regulatory family.

In terms of biological role, negatively regulates the transcription of the flagellar master operon flhDC by binding to the upstream region of the operon. This Salmonella agona (strain SL483) protein is HTH-type transcriptional regulator HdfR.